The chain runs to 173 residues: NADH-quinone oxidoreductase subunit I 2 (173 aa).

2 consecutive 4Fe-4S ferredoxin-type domains span residues 41-73 (IVLT…LAKA) and 83-112 (EYFR…LTPD). Positions 53, 56, 59, 63, 92, 95, 98, and 102 each coordinate [4Fe-4S] cluster. Positions 153–163 (GKDKGEAEHEA) are enriched in basic and acidic residues. The disordered stretch occupies residues 153–173 (GKDKGEAEHEAPPVNLKGLLP).

This sequence belongs to the complex I 23 kDa subunit family. NDH-1 is composed of 14 different subunits. Subunits NuoA, H, J, K, L, M, N constitute the membrane sector of the complex. [4Fe-4S] cluster is required as a cofactor.

The protein resides in the cell inner membrane. It catalyses the reaction a quinone + NADH + 5 H(+)(in) = a quinol + NAD(+) + 4 H(+)(out). Its function is as follows. NDH-1 shuttles electrons from NADH, via FMN and iron-sulfur (Fe-S) centers, to quinones in the respiratory chain. The immediate electron acceptor for the enzyme in this species is believed to be ubiquinone. Couples the redox reaction to proton translocation (for every two electrons transferred, four hydrogen ions are translocated across the cytoplasmic membrane), and thus conserves the redox energy in a proton gradient. This chain is NADH-quinone oxidoreductase subunit I 2, found in Rhodopseudomonas palustris (strain ATCC BAA-98 / CGA009).